The chain runs to 214 residues: NAD(P)H-quinone oxidoreductase subunit 5, chloroplastic (214 aa).

Transmembrane regions (helical) follow at residues 84 to 104 (LFPL…GIPF) and 152 to 172 (SLAI…YSFF).

This sequence belongs to the complex I subunit 5 family. NDH is composed of at least 16 different subunits, 5 of which are encoded in the nucleus.

The protein resides in the plastid. The protein localises to the chloroplast thylakoid membrane. It catalyses the reaction a plastoquinone + NADH + (n+1) H(+)(in) = a plastoquinol + NAD(+) + n H(+)(out). The enzyme catalyses a plastoquinone + NADPH + (n+1) H(+)(in) = a plastoquinol + NADP(+) + n H(+)(out). Functionally, NDH shuttles electrons from NAD(P)H:plastoquinone, via FMN and iron-sulfur (Fe-S) centers, to quinones in the photosynthetic chain and possibly in a chloroplast respiratory chain. The immediate electron acceptor for the enzyme in this species is believed to be plastoquinone. Couples the redox reaction to proton translocation, and thus conserves the redox energy in a proton gradient. The polypeptide is NAD(P)H-quinone oxidoreductase subunit 5, chloroplastic (ndhF) (Brachypodium sylvaticum (False brome)).